The following is a 176-amino-acid chain: Disulfide bond formation protein B (176 aa).

Residues 1–14 (MLRFLNQCSQGRGA) lie on the Cytoplasmic side of the membrane. A helical membrane pass occupies residues 15 to 31 (WLLMAFTALALELTALW). The Periplasmic segment spans residues 32-49 (FQHVMLLKPCVLCIYERC). C41 and C44 are oxidised to a cystine. The chain crosses the membrane as a helical span at residues 50 to 65 (ALFGVLGAALIGAIAP). The Cytoplasmic segment spans residues 66–71 (KTPLRY). Residues 72 to 89 (VAMVIWLYSAFRGVQLTY) traverse the membrane as a helical segment. Residues 90 to 144 (EHTMLQLYPSPFATCDFMVRFPEWLPLDKWVPQVFVASGDCAERQWDFLGLEMPQ) lie on the Periplasmic side of the membrane. A disulfide bridge connects residues C104 and C130. A helical transmembrane segment spans residues 145–163 (WLLGIFIAYLIVAVLVMIS). Residues 164–176 (QPFKAKKRDLFGR) are Cytoplasmic-facing.

It belongs to the DsbB family.

The protein localises to the cell inner membrane. Functionally, required for disulfide bond formation in some periplasmic proteins. Acts by oxidizing the DsbA protein. In Shigella sonnei (strain Ss046), this protein is Disulfide bond formation protein B.